We begin with the raw amino-acid sequence, 393 residues long: Sugar efflux transporter B (393 aa).

A run of 12 helical transmembrane segments spans residues 13 to 33 (FDLTSTAFLIVAFLTGIAGAL), 52 to 72 (MVGFFFTGSAVIGIIVSQFLA), 84 to 101 (LIVFCCVLGMLACVLFAW), 105 to 124 (YFILLFIGVFLSSFGSTANP), 152 to 172 (VSLAWVIGPPLAYALAMGFSF), 174 to 194 (VMYLSAAVAFIVCGVMVWFFL), 219 to 239 (LLLFVICTLMWGTNSLYIINM), 253 to 273 (LAGVMMGTAAGLEIPTMLIAG), 283 to 303 (LLMCIAVVAGLCFYVGMLLAH), 308 to 328 (LLGLQLLNAIYIGILGGIGML), 344 to 364 (LYTNTIRVGWIIAGSLAGIAA), and 366 to 386 (IWNYHAVFWFALVMIVATMFC).

This sequence belongs to the major facilitator superfamily. Set transporter family.

It localises to the cell inner membrane. In terms of biological role, involved in the efflux of sugars. The physiological role may be the detoxification of non-metabolizable sugar analogs. Can transport lactose and glucose. The polypeptide is Sugar efflux transporter B (setB) (Salmonella typhimurium (strain LT2 / SGSC1412 / ATCC 700720)).